Consider the following 29-residue polypeptide: Brevinin-2Td (29 aa).

A disulfide bridge connects residues Cys23 and Cys29.

The protein belongs to the frog skin active peptide (FSAP) family. Brevinin subfamily. In terms of tissue distribution, expressed by the skin glands.

It localises to the secreted. In terms of biological role, antibacterial activity against representative Gram-negative and Gram-positive bacteria. This Rana temporaria (European common frog) protein is Brevinin-2Td.